The chain runs to 144 residues: Small ribosomal subunit protein eS12z (144 aa).

Residue serine 2 is modified to N-acetylserine.

The protein belongs to the eukaryotic ribosomal protein eS12 family.

This is Small ribosomal subunit protein eS12z (RPS12A) from Arabidopsis thaliana (Mouse-ear cress).